The chain runs to 130 residues: Small ribosomal subunit protein uS9 (130 aa).

It belongs to the universal ribosomal protein uS9 family.

In Hahella chejuensis (strain KCTC 2396), this protein is Small ribosomal subunit protein uS9.